The following is a 460-amino-acid chain: ATP synthase subunit beta (460 aa).

Residue 150–157 coordinates ATP; that stretch reads GGAGVGKT.

The protein belongs to the ATPase alpha/beta chains family. As to quaternary structure, F-type ATPases have 2 components, CF(1) - the catalytic core - and CF(0) - the membrane proton channel. CF(1) has five subunits: alpha(3), beta(3), gamma(1), delta(1), epsilon(1). CF(0) has three main subunits: a(1), b(2) and c(9-12). The alpha and beta chains form an alternating ring which encloses part of the gamma chain. CF(1) is attached to CF(0) by a central stalk formed by the gamma and epsilon chains, while a peripheral stalk is formed by the delta and b chains.

It is found in the cell inner membrane. It carries out the reaction ATP + H2O + 4 H(+)(in) = ADP + phosphate + 5 H(+)(out). Its function is as follows. Produces ATP from ADP in the presence of a proton gradient across the membrane. The catalytic sites are hosted primarily by the beta subunits. The chain is ATP synthase subunit beta from Pectobacterium carotovorum subsp. carotovorum (strain PC1).